The chain runs to 201 residues: Dermatopontin (201 aa).

Positions 1–18 (MDLTLLWVLLPLVTVAWG) are cleaved as a signal peptide. Pyrrolidone carboxylic acid is present on glutamine 19. Residue tyrosine 23 is modified to Sulfotyrosine. 4 tandem repeats follow at residues 26–79 (SYHQ…ACMP), 70–75 (DRQWNY), 80–135 (TPQS…CCRY), and 125–130 (DREWQF). The 2 X 53-55 AA tandem repeats stretch occupies residues 26–135 (SYHQYHDYSD…REWQFYCCRY (110 aa)). 5 cysteine pairs are disulfide-bonded: cysteine 50–cysteine 77, cysteine 90–cysteine 132, cysteine 106–cysteine 133, cysteine 139–cysteine 196, and cysteine 143–cysteine 189. The segment at 70-186 (DRQWNYACMP…AVERDRQWKF (117 aa)) is 3 X 6 AA tandem repeats of D-R-[EQ]-W-[NQK]-[FY]. Residues tyrosine 162, tyrosine 164, tyrosine 166, and tyrosine 167 each carry the sulfotyrosine modification. One copy of the 2-3 repeat lies at 181-186 (DRQWKF). Tyrosine 194 is modified (sulfotyrosine).

It belongs to the dermatopontin family. As to quaternary structure, interacts with TGFB1, DCN and collagen. Sulfated on tyrosine residue(s). In terms of tissue distribution, expressed in skeletal muscle, heart, pancreas, skin and cultured fibroblasts.

The protein localises to the secreted. Its subcellular location is the extracellular space. The protein resides in the extracellular matrix. Seems to mediate adhesion by cell surface integrin binding. May serve as a communication link between the dermal fibroblast cell surface and its extracellular matrix environment. Enhances TGFB1 activity. Inhibits cell proliferation. Accelerates collagen fibril formation, and stabilizes collagen fibrils against low-temperature dissociation. The polypeptide is Dermatopontin (DPT) (Bos taurus (Bovine)).